The primary structure comprises 292 residues: Shikimate dehydrogenase (NADP(+)) (292 aa).

Shikimate is bound by residues 25–27 (SKS) and Thr72. The Proton acceptor role is filled by Lys76. The shikimate site is built by Asn97 and Asp113. NADP(+) contacts are provided by residues 137-141 (GAGGA), 161-166 (NRTQSK), and Met230. Tyr232 provides a ligand contact to shikimate. Gly254 contacts NADP(+).

The protein belongs to the shikimate dehydrogenase family. In terms of assembly, homodimer.

It catalyses the reaction shikimate + NADP(+) = 3-dehydroshikimate + NADPH + H(+). It functions in the pathway metabolic intermediate biosynthesis; chorismate biosynthesis; chorismate from D-erythrose 4-phosphate and phosphoenolpyruvate: step 4/7. Its function is as follows. Involved in the biosynthesis of the chorismate, which leads to the biosynthesis of aromatic amino acids. Catalyzes the reversible NADPH linked reduction of 3-dehydroshikimate (DHSA) to yield shikimate (SA). This chain is Shikimate dehydrogenase (NADP(+)), found in Shewanella sp. (strain ANA-3).